Here is a 716-residue protein sequence, read N- to C-terminus: Myogenesis-regulating glycosidase (716 aa).

Positions 1–11 (MSQNLQETSQA) are enriched in polar residues. Residues 1–26 (MSQNLQETSQAYPRHRPGSHAGPKSL) form a disordered region. Residues 1–55 (MSQNLQETSQAYPRHRPGSHAGPKSLKVTPRATMYTFLPDNFSPAKPKPTKELRP) lie on the Cytoplasmic side of the membrane. Residues 56–76 (LLCSAVLGLLLVLAAVVAWCY) form a helical; Signal-anchor for type II membrane protein membrane-spanning segment. The Extracellular segment spans residues 77–716 (YSASLRKAER…DEVAYFTWAS (640 aa)). Asn-239, Asn-249, and Asn-455 each carry an N-linked (GlcNAc...) asparagine glycan. Catalysis depends on residues Asp-462 and Glu-465. The Proton donor role is filled by Asp-527.

This sequence belongs to the glycosyl hydrolase 31 family. Interacts with IGF2; this interaction is required for IGF2 secretion. As to expression, expressed in brain, liver, spleen, skeletal muscle, heart, lung and kidney. High expression is observed in the cerebellum, specifically in astrocytes. Highly expressed in skeletal muscle (at protein level).

The protein resides in the nucleus membrane. It is found in the endoplasmic reticulum membrane. Putative glycosidase. Promotes myogenesis by activating AKT signaling through the maturation and secretion of IGF2. The sequence is that of Myogenesis-regulating glycosidase (Myorg) from Mus musculus (Mouse).